Consider the following 635-residue polypeptide: Extracellular metalloproteinase mep (635 aa).

An N-terminal signal peptide occupies residues 1-19 (MMRGLLLAGALGLPLAVLA). Positions 20–246 (HPTHHAHGLQ…VHGVVDYVAE (227 aa)) are excised as a propeptide. N287 carries an N-linked (GlcNAc...) asparagine glycan. The span at 290-309 (TTRGNNGIAQSNPTGGSQYL) shows a compositional bias: polar residues. A disordered region spans residues 290-311 (TTRGNNGIAQSNPTGGSQYLKN). H430 is a binding site for Zn(2+). E431 is an active-site residue. Residue H434 coordinates Zn(2+).

The protein belongs to the peptidase M36 family. The cofactor is Zn(2+).

The protein localises to the secreted. Secreted metalloproteinase that allows assimilation of proteinaceous substrates. This Aspergillus flavus (strain ATCC 200026 / FGSC A1120 / IAM 13836 / NRRL 3357 / JCM 12722 / SRRC 167) protein is Extracellular metalloproteinase mep (mep).